We begin with the raw amino-acid sequence, 29 residues long: Cyclotide vibi-A (29 aa).

Residues 1–29 (GLPVCGETCFGGTCNTPGCSCSYPICTRN) constitute a cross-link (cyclopeptide (Gly-Asn)). Intrachain disulfides connect Cys5/Cys19, Cys9/Cys21, and Cys14/Cys26.

In terms of processing, this is a cyclic peptide.

Its function is as follows. Probably participates in a plant defense mechanism. The sequence is that of Cyclotide vibi-A from Viola biflora (Yellow wood violet).